The following is a 444-amino-acid chain: NAD(P)-specific glutamate dehydrogenase (444 aa).

3 residues coordinate substrate: Lys88, Gln109, and Lys112. Lys124 (proton donor) is an active-site residue. Gly163 contacts substrate. Residues Thr207 and Asn238 each contribute to the NADP(+) site. Residue Ser376 coordinates substrate.

It belongs to the Glu/Leu/Phe/Val dehydrogenases family. As to quaternary structure, homohexamer.

The catalysed reaction is L-glutamate + NAD(+) + H2O = 2-oxoglutarate + NH4(+) + NADH + H(+). The enzyme catalyses L-glutamate + NADP(+) + H2O = 2-oxoglutarate + NH4(+) + NADPH + H(+). Catalyzes the reversible oxidative deamination of glutamate to alpha-ketoglutarate and ammonia. P.ruminicola possess both NADP(H)- and NAD(H)-dependent activities on the same enzyme, suggesting that both anabolic and catabolic forms of the enzyme might occur. In Xylanibacter ruminicola (Prevotella ruminicola), this protein is NAD(P)-specific glutamate dehydrogenase (gdhA).